Consider the following 750-residue polypeptide: GTP pyrophosphokinase rsh (750 aa).

Residues 45 to 144 enclose the HD domain; the sequence is YFSHPLEVAA…VKLADRLHNM (100 aa). The TGS domain maps to 390–451; sequence DQVFCFTPKG…KNGDEVDIIR (62 aa). The tract at residues 587-613 is disordered; that stretch reads AAKVDPAATTPKPGKRALPIRGTNPDL. One can recognise an ACT domain in the interval 676–750; it reads RISVSAINSP…SVSSAKRVNG (75 aa).

It belongs to the RelA/SpoT family.

The catalysed reaction is GTP + ATP = guanosine 3'-diphosphate 5'-triphosphate + AMP. Its function is as follows. Functions as a (p)ppGpp synthase. In eubacteria ppGpp (guanosine 3'-diphosphate 5'-diphosphate) is a mediator of the stringent response that coordinates a variety of cellular activities in response to changes in nutritional abundance. Plays a role in adaptation of Brucella to its intracellular host environment. The chain is GTP pyrophosphokinase rsh (rsh) from Brucella ovis (strain ATCC 25840 / 63/290 / NCTC 10512).